A 95-amino-acid chain; its full sequence is MSLTLDEVRRIAALARLRLSPEEERTFAGQLSAILDHVAQLAELDVSGVEPMTHALAEGVPSRPDEVRPGLPPEEALANAPAREGTFFVVPRIIE.

The protein belongs to the GatC family. Heterotrimer of A, B and C subunits.

It carries out the reaction L-glutamyl-tRNA(Gln) + L-glutamine + ATP + H2O = L-glutaminyl-tRNA(Gln) + L-glutamate + ADP + phosphate + H(+). The catalysed reaction is L-aspartyl-tRNA(Asn) + L-glutamine + ATP + H2O = L-asparaginyl-tRNA(Asn) + L-glutamate + ADP + phosphate + 2 H(+). In terms of biological role, allows the formation of correctly charged Asn-tRNA(Asn) or Gln-tRNA(Gln) through the transamidation of misacylated Asp-tRNA(Asn) or Glu-tRNA(Gln) in organisms which lack either or both of asparaginyl-tRNA or glutaminyl-tRNA synthetases. The reaction takes place in the presence of glutamine and ATP through an activated phospho-Asp-tRNA(Asn) or phospho-Glu-tRNA(Gln). The polypeptide is Aspartyl/glutamyl-tRNA(Asn/Gln) amidotransferase subunit C (Anaeromyxobacter sp. (strain Fw109-5)).